We begin with the raw amino-acid sequence, 364 residues long: Phosphoserine aminotransferase (364 aa).

L-glutamate is bound at residue R41. Pyridoxal 5'-phosphate contacts are provided by residues 75–76, W100, T155, D175, and Q198; that span reads AS. K199 is modified (N6-(pyridoxal phosphate)lysine). 239–240 contacts pyridoxal 5'-phosphate; it reads NT.

It belongs to the class-V pyridoxal-phosphate-dependent aminotransferase family. SerC subfamily. In terms of assembly, homodimer. Pyridoxal 5'-phosphate is required as a cofactor.

The protein resides in the cytoplasm. It catalyses the reaction O-phospho-L-serine + 2-oxoglutarate = 3-phosphooxypyruvate + L-glutamate. It carries out the reaction 4-(phosphooxy)-L-threonine + 2-oxoglutarate = (R)-3-hydroxy-2-oxo-4-phosphooxybutanoate + L-glutamate. It functions in the pathway amino-acid biosynthesis; L-serine biosynthesis; L-serine from 3-phospho-D-glycerate: step 2/3. Its function is as follows. Catalyzes the reversible conversion of 3-phosphohydroxypyruvate to phosphoserine and of 3-hydroxy-2-oxo-4-phosphonooxybutanoate to phosphohydroxythreonine. In Streptococcus thermophilus (strain CNRZ 1066), this protein is Phosphoserine aminotransferase.